Reading from the N-terminus, the 836-residue chain is RNA-binding protein 12B-A (836 aa).

Residues 154–229 form the RRM 1 domain; sequence PYLFLRGLPY…RFIEVMQGSE (76 aa). The interval 237-277 is disordered; the sequence is GTATEGGDTPRMRSEEHSPSRRINGRHFRKRSHSKSPRARS. The segment covering 244 to 255 has biased composition (basic and acidic residues); the sequence is DTPRMRSEEHSP. The span at 259–277 shows a compositional bias: basic residues; sequence INGRHFRKRSHSKSPRARS. RRM domains follow at residues 283-359 and 401-478; these read FYVH…PVSR and LCIY…LISE. Disordered stretches follow at residues 539–572 and 620–644; these read GHFKHPQGYFRQSDRRSPEDFRHSPEDYRHPWEE and SQEHFRRSYQEHIRQPPEEHFRRSR. Residues 550 to 572 are compositionally biased toward basic and acidic residues; sequence QSDRRSPEDFRHSPEDYRHPWEE. At Ser-703 the chain carries Phosphoserine. Lys-758 bears the N6-acetyllysine mark. The RRM 4 domain occupies 760 to 836; it reads IPVKISNLPF…GPRKVKLSLL (77 aa).

The sequence is that of RNA-binding protein 12B-A (Rbm12b1) from Mus musculus (Mouse).